The following is a 334-amino-acid chain: O(6)-methylguanine-induced apoptosis 2 (334 aa).

Residues 1-60 (MDNSAQKNERTGKHPRRASEVQKGFTAAYPTQSSIPFKSQASVIPESEKKGFNSQAKRFP) are disordered. Over residues 7–20 (KNERTGKHPRRASE) the composition is skewed to basic and acidic residues. Residues 29 to 42 (YPTQSSIPFKSQAS) show a composition bias toward polar residues. 7 STPGR repeats span residues 67 to 74 (PGPGFYNV), 109 to 117 (PAANAYTIP), 148 to 155 (PAPNYYNA), 187 to 206 (GPPPGHYDINESLVKQSPNT), 225 to 257 (GPGPGYYNPSDCTKVPKKTLFPKNPILNFSAQP), 267 to 282 (PGPGQYEIVDYLGPRK), and 306 to 316 (LPGPATYKPEL). Tyr-72 carries the post-translational modification Phosphotyrosine.

Belongs to the STPG1 family.

Its subcellular location is the cytoplasm. It localises to the nucleus. May positively contribute to the induction of apoptosis triggered by O(6)-methylguanine. This is O(6)-methylguanine-induced apoptosis 2 (STPG1) from Homo sapiens (Human).